Reading from the N-terminus, the 92-residue chain is Progonadoliberin-1 (92 aa).

The signal sequence occupies residues 1–23 (METIPKLMAAVVLLTVCLEGCSS). The residue at position 24 (glutamine 24) is a Pyrrolidone carboxylic acid. At glycine 33 the chain carries Glycine amide.

It belongs to the GnRH family. In terms of processing, the precursor is cleaved by ACE, which removes the Gly-Lys-Arg peptide at the C-terminus, leading to mature hormone. The mature form of Gonadoliberin-1 is also cleaved and degraded by ACE. Central nervous system.

It is found in the secreted. Its function is as follows. Stimulates the secretion of gonadotropins; it stimulates the secretion of both luteinizing and follicle-stimulating hormones. In Rattus norvegicus (Rat), this protein is Progonadoliberin-1 (Gnrh1).